Consider the following 431-residue polypeptide: MAKIINVIGREIMDSRGNPTVEAEVHLEGGFVGMAAAPSGASTGSREALELRDGDKSRYLGKGVLTAVANVNDLIRTALLGKDATAQAELDQIMIDLDGTENKDKLGANAILAVSLAAAKAAAAFKGIPLYAHIAELNGTPGQYSMPVPMMNILNGGEHADNNVDIQEFMVQPVGAKTFREALRMGAEIFHTLKKVLHDKGLSTSVGDEGGFAPNLASNADALAIIKEAVELAGYKLGSDVTLALDCAASEFYKDGKYDLAGEGKVFDSNGFSDFLKSLADQYPIVSIEDGLDESDWDGWAYQTQIMGDKIQLVGDDLFVTNTKILTRGIENGIANSILIKFNQIGSLTETLAAIRMAKEAGYTAVISHRSGETEDSTIADLAVGTAAGQIKTGSLCRSDRVAKYNQLLRIEEQLGEKAPYRGLKEIKGQA.

Glutamine 167 serves as a coordination point for (2R)-2-phosphoglycerate. Glutamate 209 functions as the Proton donor in the catalytic mechanism. 3 residues coordinate Mg(2+): aspartate 246, glutamate 289, and aspartate 316. Lysine 341, arginine 370, serine 371, and lysine 392 together coordinate (2R)-2-phosphoglycerate. The Proton acceptor role is filled by lysine 341.

Belongs to the enolase family. As to quaternary structure, component of the RNA degradosome, a multiprotein complex involved in RNA processing and mRNA degradation. Requires Mg(2+) as cofactor.

It is found in the cytoplasm. The protein resides in the secreted. It localises to the cell surface. It catalyses the reaction (2R)-2-phosphoglycerate = phosphoenolpyruvate + H2O. It participates in carbohydrate degradation; glycolysis; pyruvate from D-glyceraldehyde 3-phosphate: step 4/5. In terms of biological role, catalyzes the reversible conversion of 2-phosphoglycerate (2-PG) into phosphoenolpyruvate (PEP). It is essential for the degradation of carbohydrates via glycolysis. The polypeptide is Enolase (Shewanella baltica (strain OS223)).